Here is a 442-residue protein sequence, read N- to C-terminus: tRNA-2-methylthio-N(6)-dimethylallyladenosine synthase (442 aa).

The MTTase N-terminal domain maps to 3–118 (KKVFIKTFGC…LPELLNARAA (116 aa)). Residues Cys12, Cys49, Cys81, Cys155, Cys159, and Cys162 each contribute to the [4Fe-4S] cluster site. The region spanning 141–374 (RVEGSSAFVS…QAVINNNIKD (234 aa)) is the Radical SAM core domain. The TRAM domain occupies 377–440 (DERVGTVQRL…TFTLRGEVVV (64 aa)).

Belongs to the methylthiotransferase family. MiaB subfamily. As to quaternary structure, monomer. [4Fe-4S] cluster serves as cofactor.

The protein localises to the cytoplasm. It catalyses the reaction N(6)-dimethylallyladenosine(37) in tRNA + (sulfur carrier)-SH + AH2 + 2 S-adenosyl-L-methionine = 2-methylsulfanyl-N(6)-dimethylallyladenosine(37) in tRNA + (sulfur carrier)-H + 5'-deoxyadenosine + L-methionine + A + S-adenosyl-L-homocysteine + 2 H(+). In terms of biological role, catalyzes the methylthiolation of N6-(dimethylallyl)adenosine (i(6)A), leading to the formation of 2-methylthio-N6-(dimethylallyl)adenosine (ms(2)i(6)A) at position 37 in tRNAs that read codons beginning with uridine. The polypeptide is tRNA-2-methylthio-N(6)-dimethylallyladenosine synthase (Delftia acidovorans (strain DSM 14801 / SPH-1)).